The chain runs to 205 residues: COMM domain-containing protein 5 (205 aa).

Residues 130–194 enclose the COMM domain; sequence QLSSFKWRVD…KLLKDLEDLE (65 aa).

The protein belongs to the COMM domain-containing protein 5 family. Component of the commander complex consisting of the CCC subcomplex and the retriever subcomplex. Component of the CCC subcomplex.

In terms of biological role, scaffold protein in the commander complex that is essential for endosomal recycling of transmembrane cargos; the commander complex is composed of the CCC subcomplex and the retriever subcomplex. This chain is COMM domain-containing protein 5 (commd5), found in Dictyostelium discoideum (Social amoeba).